Reading from the N-terminus, the 409-residue chain is Wadjet protein JetD (409 aa).

Component of antiplasmid transformation system Wadjet type I, composed of JetA, JetB, JetC and JetD. Expression of Wadjet type I in B.subtilis (strain BEST7003) reduces the transformation efficiency of plasmid pHCMC05. This is Wadjet protein JetD from Bacillus cereus (strain Q1).